Consider the following 2197-residue polypeptide: MSSICFAGGNHARLPSKAAYYRAISDRELDREGRFPCGCLAQYTVQAPPPAKTQEKAVGRSADLQKGNVAPLKKQRCDVVVAVSGPPPLELVYPARVGQHRLDQPSKGPLAVPSAKQTSTAMEVVLSVGEAALTAPWLLCSYKSGVSSPPPPMTQRQQFAAIKRRLVQKGQQIIRELIRARKAAKYAAFAARKKAAAVAAQKARAEAPRLAAQKAAIAKILRDRQLVSLPPPPPPSAARLAAEAELASKSASLQRLKAFHRANRVRPVLNNSFPSPPLACKPDPALLERLRLATPSRCTVATKRQRDFVVAPLATQIRVAKCASHQEAYDSCRSILIEEWPESRYLFGPLSFVGDWEHVPGMLMQYRLCVLFSMVRDVMPALSLVADTLHALRSGTAPNIVFKNAMSTANQILECSHSSHAAQGFGNFLSRGKSAAINLASGLSSFVGEKVVSGANHVVNKASEVIVDKLFVPFVKLLREHFDDTIGKWIPKLLGATQKIEELWRWSLEWAQNMSKKLDVSLRVLRGSALVGVGLLLVSGILYFAEQLLRSFGLLIVAGSFISMFVGGCLLAYAGSMAGIFDEQMMRVRGILCEIPMLLYLKAQPDPFFPKKSGGRAPTQGLTDVFGVPLSIMNAIGDGLVHHSLDTLTLMGKFGAAMDNVRKGITCMRSFVSWLMEHLALALDKITGKRTSFFRELATLINFDVEKWVRDSQQYLLAAEIYVDGDTVVMDTCRHLLDKGLKLQRMMVSAKSGCSFNYGRLVGDLVKRLSDLHKRYCASGRRVHYRLAPFWVYLYGGPRCGKSLFAQSFMNAAVDFMGTTVDNCYFKNARDDFWSGYRQEAICCVDDLSSCETQPSIESEFIQLITTMRYGLNMAGVEEKGASFDSKMVITTSNFFTAPTTAKIASKAAYNDRRHACILVQRKEGVAYNPSDPAAAAEAMFVDSTTQHPLSEWMSMQELSAELLLRYQQHREAQHAEYSYWKSTSRTSHDVFDILQKCVNGDTQWLSLPVDVIPPSIRQKHKGNRVFAIDGRIFMFDYMTLEYDEIKEKENLDARHLEARILEKYGDTRLLLEKWGANGVVAQFIEQLLEGPSNVASLEVLSKDSLESHKEFFSTLGLIERATLRAVQKKIDAAREDLMHLSGLKPGRSLTELFVEAYDWVYANGGKLLLVLAAVILILFFGSACIKLMQAIFCGAAGGTVSMAAVGKMTVQSTIPSGSYADVYNARNMTRVFRPQSVQGSSLAEAQFNESHAVNMLVRIDLPDGNIISACRFRGKSLALTKHQALTIPPGAKIHIVYTDNNGNTKAPLTHFFQPTGPNGEHFLRFFNGTEVCIYSHPQLSALPGAPQNYFLKDVEKISGDIAIKGCGIKLGRTSVGECVGVKDNEPVLNHWRAVAKVRTTKITIDNYSEGGDYSNDLPTSIISEYVNSPEDCGALLVAHLEGGYKIIGMHVAGSSYPVEVDGVQMPRYISHASFFPDYSSFAPCQSSVIKSLIQEAGVEERGVSKVGHIKDPAETPHVGGKTKLELVDEAFLVPSPVEVKIPSILSKDDPRIPEAYKGYDPLGDAMEKFYEPMLDLDEDVLESVMADMYDEFYDCQTTLRIMSDDEVINGSDFGFNIEAVVKGTSEGYPFVLSRRPGEKGKARFLEELEPQPGDTKPKYKLVVGTEVHSAMVAMEQQARTEVPLLIGMDVPKDERLKPSKVLEKPKTRTFVVLPMHYNLLLRKYVGILCSSMQVNRHRLACAVGTNPYSRDWTDIYQRLAEKNSVALNCDYSRFDGLLNYQAYVHIVNFINKLYNDEHSIVRGNLLMAMYGRWSVCGQRVFEVRAGMPSGCALTVIINSLFNEMLIRYVYRITVPRPLVNNFKQEVCLIVYGDDNLISIKPDTMKYFNGEQIKTILAKYKVTITDGSDKNSPVLRAKPLKQLDFLKRGFRVESDGRVLAPLDLQAIYSSLYYINPQGNILKSLFLNAQVALRELYLHGDVEQFTAVRNFYVNQIGGNFLSLPQWRHCASFHDEQYSQWKPWSPVKFLEVDVPDAKFLQHKAPATALSIVADRLAVAGPGWRNKDPDRYLLVSLTSLKANEGGLYFPVDYGEGTGQQATEASIRAYRRLKDHRVRHMRDSWNEGKTIVFRCEGPFVSGWAAAISFGTSVGMNAQDLLINYGIQGGAHKEYLGRYFVGARFKELERYDRPFQSRIIAS.

Topologically, residues 621–1167 are cytoplasmic; the sequence is GLTDVFGVPL…YDWVYANGGK (547 aa). The SF3 helicase domain occupies 766-933; the sequence is VKRLSDLHKR…EGVAYNPSDP (168 aa). ATP is bound at residue 796–803; sequence GGPRCGKS. The chain crosses the membrane as a helical span at residues 1168–1188; it reads LLLVLAAVILILFFGSACIKL. At 1189–1212 the chain is on the lumenal side; sequence MQAIFCGAAGGTVSMAAVGKMTVQ. N1228 carries an N-linked (GlcNAc...) asparagine; by host glycan. The region spanning 1243-1475 is the Peptidase C3 domain; that stretch reads LAEAQFNESH…MPRYISHASF (233 aa). Residues H1283, E1331, and C1433 each act as for picornain 3C-like protease activity in the active site. A RdRp catalytic domain is found at 1765-1888; sequence SVALNCDYSR…SIKPDTMKYF (124 aa).

Belongs to the nepoviruses RNA1 polyprotein family. Post-translationally, specific enzymatic cleavages by picornain 3C-like protease in vivo yield mature proteins. Picornain 3C-like protease is autocatalytically processed. NTB exists as NTB-VPg polyprotein as well as NTB mature protein. VPg is uridylylated by the polymerase and is covalently linked to the 5'-end of genomic RNA. This uridylylated form acts as a nucleotide-peptide primer for the polymerase.

The protein localises to the host endoplasmic reticulum lumen. It is found in the host endoplasmic reticulum membrane. The catalysed reaction is RNA(n) + a ribonucleoside 5'-triphosphate = RNA(n+1) + diphosphate. In terms of biological role, picornain 3C-like protease is a thiol protease that cleaves at Gln-|-Gly or Gln-|-Ser sites in the P1 and P2 polyproteins. Its function is as follows. The VPg-NTB polyprotein may act as a membrane-anchor for the replication complex. This chain is RNA1 polyprotein, found in Tomato ringspot virus (isolate raspberry) (ToRSV).